Consider the following 511-residue polypeptide: Histidine ammonia-lyase (511 aa).

The 5-imidazolinone (Ala-Gly) cross-link spans A142–G144. A 2,3-didehydroalanine (Ser) modification is found at S143.

The protein belongs to the PAL/histidase family. In terms of processing, contains an active site 4-methylidene-imidazol-5-one (MIO), which is formed autocatalytically by cyclization and dehydration of residues Ala-Ser-Gly.

It localises to the cytoplasm. It catalyses the reaction L-histidine = trans-urocanate + NH4(+). It functions in the pathway amino-acid degradation; L-histidine degradation into L-glutamate; N-formimidoyl-L-glutamate from L-histidine: step 1/3. This chain is Histidine ammonia-lyase, found in Rhizobium rhizogenes (Agrobacterium rhizogenes).